Reading from the N-terminus, the 353-residue chain is MLIFPLLNDLSRKIIHIDMDAFFAAVEIKDNPKLRGKPVIIGSDPRQTGGRGVVSTCSYEARAFGVHSAMSSKEAYERCPQAVFISGNYEKYKAVGLQIRAIFKRYTDLIEPMSIDEAYLDVTENKLGIKSAVKIARLIQKDIWQELHLTASAGISYNKFLAKMASDYQKPHGLTVILPEQAEDFLKQMDISKFHGVGKKTVERLHQMGVFTGADLLEVPEVTLIDRFGRLGYDLYRKARGIHNSPVKSNRIRKSIGKEKTYGKILRAEEDIKKELTLLSEKVALNLHQQEKAGKIVILKIRYEDFSTLTKRKSIAQKTQDASQISQIALQLYEELSEKERGVRLLGITMTGF.

In terms of domain architecture, UmuC spans 14 to 198; it reads IIHIDMDAFF…MDISKFHGVG (185 aa). The Mg(2+) site is built by Asp-18 and Asp-116. Residue Glu-117 is part of the active site.

This sequence belongs to the DNA polymerase type-Y family. As to quaternary structure, monomer. Mg(2+) is required as a cofactor.

It localises to the cytoplasm. It carries out the reaction DNA(n) + a 2'-deoxyribonucleoside 5'-triphosphate = DNA(n+1) + diphosphate. Poorly processive, error-prone DNA polymerase involved in untargeted mutagenesis. Copies undamaged DNA at stalled replication forks, which arise in vivo from mismatched or misaligned primer ends. These misaligned primers can be extended by PolIV. Exhibits no 3'-5' exonuclease (proofreading) activity. May be involved in translesional synthesis, in conjunction with the beta clamp from PolIII. The protein is DNA polymerase IV of Streptococcus pneumoniae serotype 2 (strain D39 / NCTC 7466).